We begin with the raw amino-acid sequence, 381 residues long: Succinyl-diaminopimelate desuccinylase (381 aa).

His-71 contributes to the Zn(2+) binding site. Asp-73 is a catalytic residue. Asp-104 lines the Zn(2+) pocket. The active-site Proton acceptor is the Glu-138. Residues Glu-139, Glu-167, and His-353 each coordinate Zn(2+).

It belongs to the peptidase M20A family. DapE subfamily. In terms of assembly, homodimer. Zn(2+) serves as cofactor. Co(2+) is required as a cofactor.

The catalysed reaction is N-succinyl-(2S,6S)-2,6-diaminopimelate + H2O = (2S,6S)-2,6-diaminopimelate + succinate. It functions in the pathway amino-acid biosynthesis; L-lysine biosynthesis via DAP pathway; LL-2,6-diaminopimelate from (S)-tetrahydrodipicolinate (succinylase route): step 3/3. In terms of biological role, catalyzes the hydrolysis of N-succinyl-L,L-diaminopimelic acid (SDAP), forming succinate and LL-2,6-diaminopimelate (DAP), an intermediate involved in the bacterial biosynthesis of lysine and meso-diaminopimelic acid, an essential component of bacterial cell walls. This Shewanella pealeana (strain ATCC 700345 / ANG-SQ1) protein is Succinyl-diaminopimelate desuccinylase.